The primary structure comprises 130 residues: Small ribosomal subunit protein uS9 (130 aa).

The protein belongs to the universal ribosomal protein uS9 family.

This is Small ribosomal subunit protein uS9 from Haemophilus influenzae (strain 86-028NP).